A 159-amino-acid chain; its full sequence is ATP synthase subunit delta, mitochondrial (159 aa).

The transit peptide at 1–23 (MFRLSAARTLAKSVNTVVAKRTY) directs the protein to the mitochondrion.

Belongs to the ATPase epsilon chain family. F-type ATPases have 2 components, CF(1) - the catalytic core - and CF(0) - the membrane proton channel. CF(1) has five subunits: alpha(3), beta(3), gamma(1), delta(1), epsilon(1). CF(0) has three main subunits: a, b and c.

It localises to the mitochondrion. It is found in the mitochondrion inner membrane. In terms of biological role, mitochondrial membrane ATP synthase (F(1)F(0) ATP synthase or Complex V) produces ATP from ADP in the presence of a proton gradient across the membrane which is generated by electron transport complexes of the respiratory chain. F-type ATPases consist of two structural domains, F(1) - containing the extramembraneous catalytic core, and F(0) - containing the membrane proton channel, linked together by a central stalk and a peripheral stalk. During catalysis, ATP turnover in the catalytic domain of F(1) is coupled via a rotary mechanism of the central stalk subunits to proton translocation. Part of the complex F(1) domain and of the central stalk which is part of the complex rotary element. Rotation of the central stalk against the surrounding alpha(3)beta(3) subunits leads to hydrolysis of ATP in three separate catalytic sites on the beta subunits. In Kluyveromyces lactis (strain ATCC 8585 / CBS 2359 / DSM 70799 / NBRC 1267 / NRRL Y-1140 / WM37) (Yeast), this protein is ATP synthase subunit delta, mitochondrial (ATP16).